The primary structure comprises 146 residues: MRHGLAGRKLGVTASHRAAMFRNMAVALLKHEQITTTLPKAKELRPVAEKLITLGKRGGLHARRQAHALLRDDVIVAKLFDSLADRYKERQGGYTRVLKAGMRYGDAADMAVIELVDRDPAAKGQDSGPKPEVASDEDEAGEAAAA.

The segment at 118-146 (RDPAAKGQDSGPKPEVASDEDEAGEAAAA) is disordered. Positions 134–146 (ASDEDEAGEAAAA) are enriched in acidic residues.

It belongs to the bacterial ribosomal protein bL17 family. Part of the 50S ribosomal subunit. Contacts protein L32.

In Acidiphilium cryptum (strain JF-5), this protein is Large ribosomal subunit protein bL17.